Consider the following 104-residue polypeptide: L-rhamnose mutarotase (104 aa).

Tyr-18 contributes to the substrate binding site. The active-site Proton donor is the His-22. Residues Tyr-41 and 76–77 (WW) each bind substrate.

This sequence belongs to the rhamnose mutarotase family. In terms of assembly, homodimer.

Its subcellular location is the cytoplasm. The catalysed reaction is alpha-L-rhamnose = beta-L-rhamnose. Its pathway is carbohydrate metabolism; L-rhamnose metabolism. Involved in the anomeric conversion of L-rhamnose. The sequence is that of L-rhamnose mutarotase from Bacillus subtilis (strain 168).